A 191-amino-acid polypeptide reads, in one-letter code: Potassium-transporting ATPase KdpC subunit (191 aa).

A helical transmembrane segment spans residues 10–30 (ITLVFCVFFSVFYILVLWLFA).

Belongs to the KdpC family. As to quaternary structure, the system is composed of three essential subunits: KdpA, KdpB and KdpC.

It is found in the cell inner membrane. Its function is as follows. Part of the high-affinity ATP-driven potassium transport (or Kdp) system, which catalyzes the hydrolysis of ATP coupled with the electrogenic transport of potassium into the cytoplasm. This subunit acts as a catalytic chaperone that increases the ATP-binding affinity of the ATP-hydrolyzing subunit KdpB by the formation of a transient KdpB/KdpC/ATP ternary complex. The sequence is that of Potassium-transporting ATPase KdpC subunit from Bacteroides fragilis (strain ATCC 25285 / DSM 2151 / CCUG 4856 / JCM 11019 / LMG 10263 / NCTC 9343 / Onslow / VPI 2553 / EN-2).